The primary structure comprises 179 residues: Segregation and condensation protein B (179 aa).

Belongs to the ScpB family. In terms of assembly, homodimer. Homodimerization may be required to stabilize the binding of ScpA to the Smc head domains. Component of a cohesin-like complex composed of ScpA, ScpB and the Smc homodimer, in which ScpA and ScpB bind to the head domain of Smc. The presence of the three proteins is required for the association of the complex with DNA.

The protein resides in the cytoplasm. Functionally, participates in chromosomal partition during cell division. May act via the formation of a condensin-like complex containing Smc and ScpA that pull DNA away from mid-cell into both cell halves. The sequence is that of Segregation and condensation protein B from Streptococcus equi subsp. zooepidemicus (strain H70).